A 120-amino-acid polypeptide reads, in one-letter code: Kidney androgen-regulated protein (120 aa).

The first 18 residues, 1-18 (MMICKVLVITVFCVLTVA), serve as a signal peptide directing secretion.

It is found in the secreted. The chain is Kidney androgen-regulated protein (Kap) from Rattus norvegicus (Rat).